We begin with the raw amino-acid sequence, 552 residues long: Lysine--tRNA ligase (552 aa).

The short motif at 71 to 79 (PSGLPHLGT) is the 'HIGH' region element. A 'KMSKS' region motif is present at residues 319 to 323 (KISKS). Lys322 lines the ATP pocket.

The protein belongs to the class-I aminoacyl-tRNA synthetase family.

Its subcellular location is the cytoplasm. The enzyme catalyses tRNA(Lys) + L-lysine + ATP = L-lysyl-tRNA(Lys) + AMP + diphosphate. This chain is Lysine--tRNA ligase, found in Caulobacter sp. (strain K31).